Consider the following 248-residue polypeptide: Protein GrpE (248 aa).

A disordered region spans residues 229–248; sequence AAPKEDTLPAQENQSSPADS. Polar residues predominate over residues 238–248; sequence AQENQSSPADS.

It belongs to the GrpE family. As to quaternary structure, homodimer.

It localises to the cytoplasm. Functionally, participates actively in the response to hyperosmotic and heat shock by preventing the aggregation of stress-denatured proteins, in association with DnaK and GrpE. It is the nucleotide exchange factor for DnaK and may function as a thermosensor. Unfolded proteins bind initially to DnaJ; upon interaction with the DnaJ-bound protein, DnaK hydrolyzes its bound ATP, resulting in the formation of a stable complex. GrpE releases ADP from DnaK; ATP binding to DnaK triggers the release of the substrate protein, thus completing the reaction cycle. Several rounds of ATP-dependent interactions between DnaJ, DnaK and GrpE are required for fully efficient folding. This chain is Protein GrpE, found in Trichormus variabilis (strain ATCC 29413 / PCC 7937) (Anabaena variabilis).